Consider the following 151-residue polypeptide: 1,4-dihydroxy-2-naphthoyl-CoA hydrolase (151 aa).

Asp-19 is a catalytic residue.

The protein belongs to the 4-hydroxybenzoyl-CoA thioesterase family. DHNA-CoA hydrolase subfamily.

It carries out the reaction 1,4-dihydroxy-2-naphthoyl-CoA + H2O = 1,4-dihydroxy-2-naphthoate + CoA + H(+). It participates in cofactor biosynthesis; phylloquinone biosynthesis. Its pathway is quinol/quinone metabolism; 1,4-dihydroxy-2-naphthoate biosynthesis; 1,4-dihydroxy-2-naphthoate from chorismate: step 7/7. Catalyzes the hydrolysis of 1,4-dihydroxy-2-naphthoyl-CoA (DHNA-CoA) to 1,4-dihydroxy-2-naphthoate (DHNA), a reaction involved in phylloquinone (vitamin K1) biosynthesis. The sequence is that of 1,4-dihydroxy-2-naphthoyl-CoA hydrolase from Prochlorococcus marinus (strain MIT 9313).